The primary structure comprises 38 residues: Large ribosomal subunit protein bL36 (38 aa).

The protein belongs to the bacterial ribosomal protein bL36 family.

This is Large ribosomal subunit protein bL36 from Ectopseudomonas mendocina (strain ymp) (Pseudomonas mendocina).